Reading from the N-terminus, the 142-residue chain is Prefoldin subunit alpha (142 aa).

Belongs to the prefoldin subunit alpha family. Heterohexamer of two alpha and four beta subunits.

Its subcellular location is the cytoplasm. Molecular chaperone capable of stabilizing a range of proteins. Seems to fulfill an ATP-independent, HSP70-like function in archaeal de novo protein folding. This Methanosarcina acetivorans (strain ATCC 35395 / DSM 2834 / JCM 12185 / C2A) protein is Prefoldin subunit alpha.